The chain runs to 723 residues: Catalase-peroxidase (723 aa).

Residues 98–226 (WHSAGSYRVG…LAAVMMGLIY (129 aa)) constitute a cross-link (tryptophyl-tyrosyl-methioninium (Trp-Tyr) (with M-252)). His-99 serves as the catalytic Proton acceptor. Residues 226–252 (YVNPEGVDGNPDPLKTAKDMRVTFARM) constitute a cross-link (tryptophyl-tyrosyl-methioninium (Tyr-Met) (with W-98)). His-267 serves as a coordination point for heme b.

Belongs to the peroxidase family. Peroxidase/catalase subfamily. As to quaternary structure, homodimer or homotetramer. It depends on heme b as a cofactor. Post-translationally, formation of the three residue Trp-Tyr-Met cross-link is important for the catalase, but not the peroxidase activity of the enzyme.

It carries out the reaction H2O2 + AH2 = A + 2 H2O. It catalyses the reaction 2 H2O2 = O2 + 2 H2O. Functionally, bifunctional enzyme with both catalase and broad-spectrum peroxidase activity. The chain is Catalase-peroxidase from Vibrio vulnificus (strain CMCP6).